Here is a 111-residue protein sequence, read N- to C-terminus: Stress-response A/B barrel domain-containing protein At5g22580 (111 aa).

One can recognise a Stress-response A/B barrel domain in the interval 6 to 98 (FKHLVVVKFK…VIDKIVLLDF (93 aa)). Positions 31, 34, 35, and 37 each coordinate Mg(2+).

Homodimer. The cofactor is Mg(2+).

Functionally, involved in stress response. This is Stress-response A/B barrel domain-containing protein At5g22580 from Arabidopsis thaliana (Mouse-ear cress).